A 208-amino-acid polypeptide reads, in one-letter code: Germin-like protein subfamily 3 member 1 (208 aa).

The first 18 residues, M1–S18, serve as a signal peptide directing secretion. Residues C23 and C38 are joined by a disulfide bond. The region spanning S52–K198 is the Cupin type-1 domain. N59 is a glycosylation site (N-linked (GlcNAc...) asparagine). The Mn(2+) site is built by H100, H102, E107, and H146.

It belongs to the germin family. In terms of assembly, may not form oligomer. In terms of tissue distribution, expressed during germination, and also in green shoots, etiolated seedlings and whole seedlings.

The protein resides in the secreted. It localises to the extracellular space. Its subcellular location is the apoplast. May play a role in plant defense. Probably has no oxalate oxidase activity even if the active site is conserved. The protein is Germin-like protein subfamily 3 member 1 (GLP1) of Arabidopsis thaliana (Mouse-ear cress).